A 142-amino-acid polypeptide reads, in one-letter code: Deoxyuridine 5'-triphosphate nucleotidohydrolase (142 aa).

Substrate contacts are provided by residues 62-64 (RSG), Asn-75, and 79-81 (TID).

This sequence belongs to the dUTPase family. It depends on Mg(2+) as a cofactor.

The enzyme catalyses dUTP + H2O = dUMP + diphosphate + H(+). It participates in pyrimidine metabolism; dUMP biosynthesis; dUMP from dCTP (dUTP route): step 2/2. Its function is as follows. This enzyme is involved in nucleotide metabolism: it produces dUMP, the immediate precursor of thymidine nucleotides and it decreases the intracellular concentration of dUTP so that uracil cannot be incorporated into DNA. The chain is Deoxyuridine 5'-triphosphate nucleotidohydrolase from Trichodesmium erythraeum (strain IMS101).